Reading from the N-terminus, the 384-residue chain is Queuine tRNA-ribosyltransferase (384 aa).

Asp92 acts as the Proton acceptor in catalysis. Substrate contacts are provided by residues 92–96 (DSGGF), Asp146, Gln192, and Gly219. The segment at 250-256 (GVGTPAE) is RNA binding. The active-site Nucleophile is the Asp269. The interval 274–278 (TRNAR) is RNA binding; important for wobble base 34 recognition. Zn(2+) contacts are provided by Cys307, Cys309, Cys312, and His338.

This sequence belongs to the queuine tRNA-ribosyltransferase family. Homodimer. Within each dimer, one monomer is responsible for RNA recognition and catalysis, while the other monomer binds to the replacement base PreQ1. Zn(2+) is required as a cofactor.

The catalysed reaction is 7-aminomethyl-7-carbaguanine + guanosine(34) in tRNA = 7-aminomethyl-7-carbaguanosine(34) in tRNA + guanine. Its pathway is tRNA modification; tRNA-queuosine biosynthesis. Its function is as follows. Catalyzes the base-exchange of a guanine (G) residue with the queuine precursor 7-aminomethyl-7-deazaguanine (PreQ1) at position 34 (anticodon wobble position) in tRNAs with GU(N) anticodons (tRNA-Asp, -Asn, -His and -Tyr). Catalysis occurs through a double-displacement mechanism. The nucleophile active site attacks the C1' of nucleotide 34 to detach the guanine base from the RNA, forming a covalent enzyme-RNA intermediate. The proton acceptor active site deprotonates the incoming PreQ1, allowing a nucleophilic attack on the C1' of the ribose to form the product. After dissociation, two additional enzymatic reactions on the tRNA convert PreQ1 to queuine (Q), resulting in the hypermodified nucleoside queuosine (7-(((4,5-cis-dihydroxy-2-cyclopenten-1-yl)amino)methyl)-7-deazaguanosine). This is Queuine tRNA-ribosyltransferase from Desulfosudis oleivorans (strain DSM 6200 / JCM 39069 / Hxd3) (Desulfococcus oleovorans).